The following is a 316-amino-acid chain: UDP-N-acetylenolpyruvoylglucosamine reductase (316 aa).

Residues 27 to 225 enclose the FAD-binding PCMH-type domain; that stretch reads VGGKAERFYR…KTAINALLKK (199 aa). Arginine 190 is a catalytic residue. The active-site Proton donor is serine 239. Glutamate 309 is a catalytic residue.

It belongs to the MurB family. It depends on FAD as a cofactor.

The protein localises to the cytoplasm. The catalysed reaction is UDP-N-acetyl-alpha-D-muramate + NADP(+) = UDP-N-acetyl-3-O-(1-carboxyvinyl)-alpha-D-glucosamine + NADPH + H(+). The protein operates within cell wall biogenesis; peptidoglycan biosynthesis. Its function is as follows. Cell wall formation. In Coxiella burnetii (strain CbuK_Q154) (Coxiella burnetii (strain Q154)), this protein is UDP-N-acetylenolpyruvoylglucosamine reductase.